The sequence spans 229 residues: Purine nucleoside phosphorylase BB_0467 (229 aa).

Positions 55, 91, and 108 each coordinate Zn(2+).

This sequence belongs to the purine nucleoside phosphorylase YfiH/LACC1 family. In terms of assembly, homodimer. The cofactor is Cu(2+). Zn(2+) is required as a cofactor.

The catalysed reaction is adenosine + phosphate = alpha-D-ribose 1-phosphate + adenine. It carries out the reaction S-methyl-5'-thioadenosine + phosphate = 5-(methylsulfanyl)-alpha-D-ribose 1-phosphate + adenine. The enzyme catalyses inosine + phosphate = alpha-D-ribose 1-phosphate + hypoxanthine. It catalyses the reaction adenosine + H2O + H(+) = inosine + NH4(+). Its function is as follows. Purine nucleoside enzyme that catalyzes the phosphorolysis of adenosine and inosine nucleosides, yielding D-ribose 1-phosphate and the respective free bases, adenine and hypoxanthine. Also catalyzes the phosphorolysis of S-methyl-5'-thioadenosine into adenine and S-methyl-5-thio-alpha-D-ribose 1-phosphate. Also has adenosine deaminase activity. The chain is Purine nucleoside phosphorylase BB_0467 from Borreliella burgdorferi (strain ATCC 35210 / DSM 4680 / CIP 102532 / B31) (Borrelia burgdorferi).